Here is a 1357-residue protein sequence, read N- to C-terminus: DNA-directed RNA polymerase subunit beta (1357 aa).

Belongs to the RNA polymerase beta chain family. In terms of assembly, the RNAP catalytic core consists of 2 alpha, 1 beta, 1 beta' and 1 omega subunit. When a sigma factor is associated with the core the holoenzyme is formed, which can initiate transcription.

It carries out the reaction RNA(n) + a ribonucleoside 5'-triphosphate = RNA(n+1) + diphosphate. In terms of biological role, DNA-dependent RNA polymerase catalyzes the transcription of DNA into RNA using the four ribonucleoside triphosphates as substrates. The sequence is that of DNA-directed RNA polymerase subunit beta from Pseudomonas fluorescens (strain SBW25).